The primary structure comprises 202 residues: Peroxynitrite isomerase (202 aa).

Residues 21–27 carry the GXWXGXG motif; the sequence is GEWEGRG. Position 193 (H193) interacts with heme b.

The protein belongs to the nitrobindin family. As to quaternary structure, homodimer. Requires heme b as cofactor.

The enzyme catalyses peroxynitrite = nitrate. The protein operates within nitrogen metabolism. Heme-binding protein able to scavenge peroxynitrite and to protect free L-tyrosine against peroxynitrite-mediated nitration, by acting as a peroxynitrite isomerase that converts peroxynitrite to nitrate. Therefore, this protein likely plays a role in peroxynitrite sensing and in the detoxification of reactive nitrogen and oxygen species (RNS and ROS, respectively). Is able to bind nitric oxide (NO) in vitro, but may act as a sensor of peroxynitrite levels in vivo. This chain is Peroxynitrite isomerase, found in Pseudarthrobacter chlorophenolicus (strain ATCC 700700 / DSM 12829 / CIP 107037 / JCM 12360 / KCTC 9906 / NCIMB 13794 / A6) (Arthrobacter chlorophenolicus).